Here is a 417-residue protein sequence, read N- to C-terminus: Serine hydroxymethyltransferase (417 aa).

(6S)-5,6,7,8-tetrahydrofolate-binding positions include Leu112 and 116–118; that span reads GHL. An N6-(pyridoxal phosphate)lysine modification is found at Lys221. Glu247 lines the (6S)-5,6,7,8-tetrahydrofolate pocket.

This sequence belongs to the SHMT family. As to quaternary structure, homodimer. The cofactor is pyridoxal 5'-phosphate.

The protein localises to the cytoplasm. It catalyses the reaction (6R)-5,10-methylene-5,6,7,8-tetrahydrofolate + glycine + H2O = (6S)-5,6,7,8-tetrahydrofolate + L-serine. The protein operates within one-carbon metabolism; tetrahydrofolate interconversion. It participates in amino-acid biosynthesis; glycine biosynthesis; glycine from L-serine: step 1/1. Functionally, catalyzes the reversible interconversion of serine and glycine with tetrahydrofolate (THF) serving as the one-carbon carrier. This reaction serves as the major source of one-carbon groups required for the biosynthesis of purines, thymidylate, methionine, and other important biomolecules. Also exhibits THF-independent aldolase activity toward beta-hydroxyamino acids, producing glycine and aldehydes, via a retro-aldol mechanism. This Borrelia turicatae (strain 91E135) protein is Serine hydroxymethyltransferase.